Here is a 274-residue protein sequence, read N- to C-terminus: MAIVKCKPTSPGRRHVVKVVNPELHKGKPYAPLLEKSSKTGGRNNNGRITTRHIGGGHKQHYRLIDFKRNKDGIPAVVERLEYDPNRSANIALVLYKDGERRYILAPKGLKAGDQIQSGVDASIKTGNALPMRNIPVGSTVHNVEMKPGKGGQLARSAGAYVQIVARDGSYVTLRLRSGEMRKVLSDCRATLGEVGNAEHMLRVLGKAGASRWRGIRPTVRGTAMNPVDHPHGGGEGRNFGKHPVTPWGVQTKGKKTRSNKRTDQFIVRRRTKK.

2 disordered regions span residues 28–54 (KPYAPLLEKSSKTGGRNNNGRITTRHI) and 221–274 (RGTA…RTKK). Over residues 39–49 (KTGGRNNNGRI) the composition is skewed to polar residues.

It belongs to the universal ribosomal protein uL2 family. Part of the 50S ribosomal subunit. Forms a bridge to the 30S subunit in the 70S ribosome.

Functionally, one of the primary rRNA binding proteins. Required for association of the 30S and 50S subunits to form the 70S ribosome, for tRNA binding and peptide bond formation. It has been suggested to have peptidyltransferase activity; this is somewhat controversial. Makes several contacts with the 16S rRNA in the 70S ribosome. The protein is Large ribosomal subunit protein uL2 of Photorhabdus laumondii subsp. laumondii (strain DSM 15139 / CIP 105565 / TT01) (Photorhabdus luminescens subsp. laumondii).